The following is a 128-amino-acid chain: Z-ring associated protein G (128 aa).

The chain crosses the membrane as a helical span at residues 7 to 27; sequence EIWFSISIAFLIGTLCGVLVM. Residues 37 to 75 are a coiled coil; that stretch reads QIQLKSELASAEAKIEEQKQQLERHFEQSANLLENLAED. The interval 105–128 is disordered; that stretch reads NHANGDEDNQPRDYSDGSSGLLKS. Basic and acidic residues predominate over residues 107-119; it reads ANGDEDNQPRDYS.

It belongs to the ZapG family. In terms of assembly, homotetramer. In solution, is primarily monomeric but forms small amounts of stable tetramer and hexadecamer. The crystal structure of the cytosolic region shows a coiled-coil tetramer in the asymmetric unit that is very likely to be a physiologically relevant assembly of the protein.

It localises to the cell inner membrane. In terms of biological role, involved in cell division, cell envelope biogenesis and cell shape maintenance. The sequence is that of Z-ring associated protein G from Haemophilus ducreyi (strain 35000HP / ATCC 700724).